The following is a 329-amino-acid chain: tRNA uridine(34) hydroxylase (329 aa).

Residues 123–217 enclose the Rhodanese domain; sequence SDPDVILVDT…YLEEVPEEES (95 aa). C177 serves as the catalytic Cysteine persulfide intermediate. A disordered region spans residues 285-329; the sequence is REKQVQLSNARGETHVGGDAAHLIDQRKKEKLAHKEQQRSGKKAK. Residues 296 to 323 are compositionally biased toward basic and acidic residues; it reads GETHVGGDAAHLIDQRKKEKLAHKEQQR.

It belongs to the TrhO family.

It catalyses the reaction uridine(34) in tRNA + AH2 + O2 = 5-hydroxyuridine(34) in tRNA + A + H2O. Functionally, catalyzes oxygen-dependent 5-hydroxyuridine (ho5U) modification at position 34 in tRNAs. The protein is tRNA uridine(34) hydroxylase of Vibrio atlanticus (strain LGP32) (Vibrio splendidus (strain Mel32)).